We begin with the raw amino-acid sequence, 1347 residues long: Protein dispatched homolog 3 (1347 aa).

The Cytoplasmic portion of the chain corresponds to 1-67; that stretch reads MDSEDDPLLQ…LGWAFTNPCC (67 aa). A helical transmembrane segment spans residues 68 to 88; it reads AGLVLFLGCSIPMVLSAFMFL. Topologically, residues 89–417 are lumenal; that stretch reads YYPPLDIDIS…YEVRRTFNND (329 aa). The interval 156–207 is disordered; it reads GNHSRPASRAPRSAPRDTVATQTSAANSSERRRREAPSPEGQVTNQSRARRG. The N-linked (GlcNAc...) asparagine glycan is linked to Asn157. Residues 159 to 168 show a composition bias toward low complexity; it reads SRPASRAPRS. In terms of domain architecture, SSD spans 412 to 570; sequence RTFNNDMLLA…LFTMPAALGL (159 aa). A helical membrane pass occupies residues 418–438; that stretch reads MLLAFISSSCIAALVYILTSC. Position 439 (Ser439) is a topological domain, cytoplasmic. The helical transmembrane segment at 440–460 threads the bilayer; sequence VFLSFFGIASIGLSCLVALFL. Over 461-463 the chain is Lumenal; the sequence is YHV. Residues 464–484 traverse the membrane as a helical segment; sequence VFGIQYLGILNGVAAFVIVGI. At 485–528 the chain is on the cytoplasmic side; the sequence is GVDDVFVFINTYRQATHLEDPQLRMIHTIQTAGKATFFTSLTTA. A helical transmembrane segment spans residues 529–549; sequence AAYAANVFSQIPAVHDFGLFM. Ser550 is a topological domain (lumenal). A helical membrane pass occupies residues 551–571; the sequence is LIVTCCWLAVLFTMPAALGLW. Residues 572 to 684 lie on the Cytoplasmic side of the membrane; sequence SLYMAPLESS…WVLWAAVKSR (113 aa). The chain crosses the membrane as a helical span at residues 685–705; the sequence is WVIVGLFASILILSLVFASRL. The Lumenal portion of the chain corresponds to 706–1137; that stretch reads RPASRAPLLF…IFMEIIGVQS (432 aa). Asn976 carries an N-linked (GlcNAc...) asparagine glycan. The helical transmembrane segment at 1138 to 1158 threads the bilayer; sequence ALYGLVLSLLICVAAVAVFTT. His1159 is a topological domain (cytoplasmic). Residues 1160–1180 traverse the membrane as a helical segment; the sequence is VLLLLPVLLSILGIVCLVVTI. At 1181–1246 the chain is on the lumenal side; sequence MYWSGWEMGA…TLEAVRHVGV (66 aa). The chain crosses the membrane as a helical span at residues 1247 to 1267; sequence AIVSSALTTVIATVPLFFCII. Over 1268–1281 the chain is Cytoplasmic; sequence APFAKFGKIVALNT. The helical transmembrane segment at 1282 to 1302 threads the bilayer; that stretch reads GVSILYTLTVSTALLGIMAPG. Topologically, residues 1303–1310 are lumenal; sequence SFTRTRTS. The chain crosses the membrane as a helical span at residues 1311-1331; that stretch reads FLKALGAVLLAGALGLGACLV. Over 1332–1347 the chain is Cytoplasmic; sequence LLRSGYKIPLPSGATL.

Belongs to the patched family. As to expression, expressed in brain, retina, testis and thymus.

The protein localises to the endoplasmic reticulum membrane. It localises to the nucleus membrane. It is found in the cytoplasmic vesicle membrane. Its function is as follows. Plays a role in neuronal proliferation and differentiation. Plays a role in the accumulation of cellular cholesterol. Involved in intracellular lipid droplet formation. May contribute to cholesterol homeostasis in neuronal cells. The protein is Protein dispatched homolog 3 of Mus musculus (Mouse).